The sequence spans 179 residues: MTFDLDIKNTVRTIPDYPKPGILFRDITTLLADARAFRRAVDELVHPWAGSKIDKVAGIEARGFILGGAVAHQLSAGFVPIRKKGKLPHKTVSMSYALEYGTDEMEMHVDAVQPGERVILVDDLIATGGTAEGAVKLLRQIGATVVAACFIIDLPDLGGAAKLRALDVPVRSLIAFDGH.

The protein belongs to the purine/pyrimidine phosphoribosyltransferase family. Homodimer.

The protein localises to the cytoplasm. The catalysed reaction is AMP + diphosphate = 5-phospho-alpha-D-ribose 1-diphosphate + adenine. Its pathway is purine metabolism; AMP biosynthesis via salvage pathway; AMP from adenine: step 1/1. Catalyzes a salvage reaction resulting in the formation of AMP, that is energically less costly than de novo synthesis. The polypeptide is Adenine phosphoribosyltransferase (Bradyrhizobium sp. (strain ORS 278)).